The sequence spans 125 residues: Large ribosomal subunit protein bL12 (125 aa).

This sequence belongs to the bacterial ribosomal protein bL12 family. Homodimer. Part of the ribosomal stalk of the 50S ribosomal subunit. Forms a multimeric L10(L12)X complex, where L10 forms an elongated spine to which 2 to 4 L12 dimers bind in a sequential fashion. Binds GTP-bound translation factors.

Forms part of the ribosomal stalk which helps the ribosome interact with GTP-bound translation factors. Is thus essential for accurate translation. This is Large ribosomal subunit protein bL12 from Bradyrhizobium sp. (strain BTAi1 / ATCC BAA-1182).